Consider the following 248-residue polypeptide: 3-deoxy-manno-octulosonate cytidylyltransferase (248 aa).

It belongs to the KdsB family.

Its subcellular location is the cytoplasm. The enzyme catalyses 3-deoxy-alpha-D-manno-oct-2-ulosonate + CTP = CMP-3-deoxy-beta-D-manno-octulosonate + diphosphate. The protein operates within nucleotide-sugar biosynthesis; CMP-3-deoxy-D-manno-octulosonate biosynthesis; CMP-3-deoxy-D-manno-octulosonate from 3-deoxy-D-manno-octulosonate and CTP: step 1/1. Its pathway is bacterial outer membrane biogenesis; lipopolysaccharide biosynthesis. Functionally, activates KDO (a required 8-carbon sugar) for incorporation into bacterial lipopolysaccharide in Gram-negative bacteria. The polypeptide is 3-deoxy-manno-octulosonate cytidylyltransferase (Escherichia coli O6:H1 (strain CFT073 / ATCC 700928 / UPEC)).